A 424-amino-acid polypeptide reads, in one-letter code: Histidine--tRNA ligase (424 aa).

Belongs to the class-II aminoacyl-tRNA synthetase family. Homodimer.

Its subcellular location is the cytoplasm. It carries out the reaction tRNA(His) + L-histidine + ATP = L-histidyl-tRNA(His) + AMP + diphosphate + H(+). The polypeptide is Histidine--tRNA ligase (Thioalkalivibrio sulfidiphilus (strain HL-EbGR7)).